We begin with the raw amino-acid sequence, 167 residues long: Small ribosomal subunit protein uS5 (167 aa).

The S5 DRBM domain occupies 12-75 (LQEKLIAVNR…EKARRNIVTV (64 aa)).

It belongs to the universal ribosomal protein uS5 family. As to quaternary structure, part of the 30S ribosomal subunit. Contacts proteins S4 and S8.

With S4 and S12 plays an important role in translational accuracy. In terms of biological role, located at the back of the 30S subunit body where it stabilizes the conformation of the head with respect to the body. The protein is Small ribosomal subunit protein uS5 of Shewanella baltica (strain OS223).